A 330-amino-acid polypeptide reads, in one-letter code: MSPATLQDDPSVDSFFNVVETETLALFEHLSFEFLEEFDVFAPAETGRTRDHEPPELMRGFLHCYYKDIYGIRPVERELRNTVVWLSCGFDRPPSRDAVDRFLTDLEHVVNKVFDHLVEQAALRGLLDLTYCIDSTDVRAMPADQDASKCYDPTDDEYYHGYGCTIVSTGQKIPIAAEFTESKQAPEETAMRVTRDALAVAKPIWMVGDSAYDTLDWHDHLLAAGVVPVAPYNARNTDDPKDIEYRVEDRIEQHSEDVQLKQSTLDETYNRRTGVERTNESVKDCGLGRTHARGRVHARAQVFLALCLRLVVAITNYERGDNPGSPIITV.

The protein belongs to the transposase 11 family.

Its function is as follows. Involved in the transposition of the insertion sequence ISH11. The sequence is that of Probable transposase for insertion sequence element ISH11 from Halobacterium salinarum (strain ATCC 29341 / DSM 671 / R1).